A 343-amino-acid chain; its full sequence is NADP-dependent alkenal double bond reductase P2 (343 aa).

Substrate contacts are provided by Tyr52 and Tyr79. Residues 164–167 (GAVG), Lys190, Tyr206, Asn230, 252–258 (CGMISQY), 282–284 (FVV), and Asn332 each bind NADP(+).

Belongs to the NADP-dependent oxidoreductase L4BD family. As to quaternary structure, homodimer.

The enzyme catalyses an n-alkanal + NAD(+) = an alk-2-enal + NADH + H(+). It carries out the reaction an n-alkanal + NADP(+) = an alk-2-enal + NADPH + H(+). In terms of biological role, catalyzes the reduction of the 7-8 double bond of phenylpropanal substrates, such as p-coumaryl aldehyde and coniferyl aldehyde (in vitro). Has activity towards toxic substrates, such as 4-hydroxy-(2E)-nonenal (in vitro). May play a distinct role in plant antioxidant defense and is possibly involved in NAD(P)/NAD(P)h homeostasis. The chain is NADP-dependent alkenal double bond reductase P2 (P2) from Arabidopsis thaliana (Mouse-ear cress).